Here is a 26-residue protein sequence, read N- to C-terminus: Melittin (26 aa).

Residue glycine 1 is modified to N-formylglycine; partial. Glutamine 26 carries the post-translational modification Glutamine amide.

The protein belongs to the melittin family. Monomer (in solution and for integration into membranes), homotetramer (in solution and potentially as a toroidal pore in membranes), and potenially homomultimer (as a toroidal pore in membranes). As to expression, expressed by the venom gland.

It is found in the secreted. The protein localises to the target cell membrane. In terms of biological role, main toxin of bee venom with strong hemolytic activity and antimicrobial activity. It has enhancing effects on bee venom phospholipase A2 activity. This amphipathic toxin binds to negatively charged membrane surface and forms pore by inserting into lipid bilayers inducing the leakage of ions and molecules and the enhancement of permeability that ultimately leads to cell lysis. It acts as a voltage-gated pore with higher selectivity for anions over cations. The ion conductance has been shown to be voltage-dependent. Self-association of melittin in membranes is promoted by high ionic strength, but not by the presence of negatively charged lipids. In vivo, intradermal injection into healthy human volunteers produce sharp pain sensation and an inflammatory response. It produces pain by activating primary nociceptor cells directly and indirectly due to its ability to activate plasma membrane phospholipase A2 and its pore-forming activity. The protein is Melittin (MELT) of Apis florea (Dwarf honeybee).